Here is a 156-residue protein sequence, read N- to C-terminus: Transcriptional repressor NrdR (156 aa).

Residues 3 to 34 fold into a zinc finger; it reads CPFCSETDTKVIDSRLVADGAQVRRRRECLTC. Residues 49–139 enclose the ATP-cone domain; that stretch reads PRVIKQDGTR…VYRSFQDLSE (91 aa).

The protein belongs to the NrdR family. Zn(2+) serves as cofactor.

Functionally, negatively regulates transcription of bacterial ribonucleotide reductase nrd genes and operons by binding to NrdR-boxes. The protein is Transcriptional repressor NrdR of Saccharophagus degradans (strain 2-40 / ATCC 43961 / DSM 17024).